A 409-amino-acid chain; its full sequence is LysM domain-containing GPI-anchored protein LYP6 (409 aa).

The N-terminal stretch at 1 to 27 (MAGWPAAEAAGALVVAILAAAAGGAAG) is a signal peptide. 4 cysteine pairs are disulfide-bonded: C34–C100, C40–C166, C98–C164, and C100–C166. The LysM 1 domain maps to 110 to 160 (VRYSARPADTLASVADVVFAGLASADQIRTANGLSAEDPDAPLDAGATLVV). A glycan (N-linked (GlcNAc...) asparagine) is linked at N168. Residues 179–222 (LSYVVRVGDTVQSIAATHATTVTDISNVNAMGSPIVAPGDILAI) form the LysM 2 domain. Disulfide bonds link C227–C259 and C254–C282. N244 carries an N-linked (GlcNAc...) asparagine glycan. Residues N291, N302, and N313 are each glycosylated (N-linked (GlcNAc...) asparagine). Residues 353 to 387 (SPAPGAGEAGGDIPGFPGSSNVSPANGPSGSVSQA) form a disordered region. Positions 370-387 (GSSNVSPANGPSGSVSQA) are enriched in polar residues. A387 carries GPI-anchor amidated alanine lipidation. Positions 388-409 (ASVNRPHQIVALILSVALYFQM) are cleaved as a propeptide — removed in mature form.

Interacts with LYP4. Interacts with CERK1. Interacts with CEBIP. In terms of tissue distribution, expressed in roots and leaves.

The protein localises to the cell membrane. In terms of biological role, functions in innate immunity. Functions as a pattern recognition receptor (PRR), sensing bacterial peptidoglycan (PGN) and fungal chitin at the cell surface. Involved in resistance against the bacterial pathogen Xanthomonas oryzae pv. oryzae (Xoo) and the fungal pathogen Magnaporthe oryzae. Binds PGN and fungal chitin in vitro. Involved in microbe-associated molecular patterns (MAMPs) perception and participates in the activation of defense genes against the bacterial pathogen Xanthomonas oryzae pv. oryzicola (Xoc) or the fungal pathogen Magnaporthe oryzae. In Oryza sativa subsp. japonica (Rice), this protein is LysM domain-containing GPI-anchored protein LYP6.